A 360-amino-acid chain; its full sequence is Inward rectifier potassium channel 13 (360 aa).

Residues 1-50 (MDGSHCKVIAPLLTERHQRMVTKDGHSTLQMDGAQTGLAYLRDAWGILMD) are Cytoplasmic-facing. The helical transmembrane segment at 51 to 77 (MRWRWMMLVFSASFVIHWLVFAVLWYI) threads the bilayer. At 78 to 105 (LAEMNGDLGLDHDAPPENHTICVKYITS) the chain is on the extracellular side. The segment at residues 106-122 (FTAAFSFSLETQLTIGY) is an intramembrane region (helical; Pore-forming). The short motif at 119 to 124 (TIGYGT) is the Selectivity filter element. At 123–131 (GTMFPSGDC) the chain is on the extracellular side. Residues 132–157 (PSAIALLAIQMLLGLMLEAFITGAFV) form a helical membrane-spanning segment. At 158 to 360 (AKIARPKNRA…FQISETGLTE (203 aa)) the chain is on the cytoplasmic side. Ser287 is modified (phosphoserine).

The protein belongs to the inward rectifier-type potassium channel (TC 1.A.2.1) family. As to quaternary structure, homotetramer. Interacts with RAB28; the interaction may facilitate cone outer segments phagocytosis. In terms of processing, phosphorylation at Ser-287 by PKA increases them.

The protein resides in the membrane. Its subcellular location is the cell membrane. It carries out the reaction K(+)(in) = K(+)(out). Its activity is regulated as follows. Inhibited by Ba(2+) and Cs(+), although sensitivity to those inhibitors is much lower than in other Kir channels. In terms of biological role, inward rectifier potassium channels are characterized by a greater tendency to allow potassium to flow into the cell rather than out of it. Their voltage dependence is regulated by the concentration of extracellular potassium; as external potassium is raised, the voltage range of the channel opening shifts to more positive voltages. The inward rectification is mainly due to the blockage of outward current by internal magnesium. KCNJ13 has a very low single channel conductance, low sensitivity to block by external barium and cesium, and no dependence of its inward rectification properties on the internal blocking particle magnesium. In Bos taurus (Bovine), this protein is Inward rectifier potassium channel 13 (KCNJ13).